The following is a 490-amino-acid chain: Stomatal closure-related actin-binding protein 3 (490 aa).

Belongs to the SCAB family. In terms of tissue distribution, expressed in roots, stems, leaves, siliques and flowers.

The protein resides in the cytoplasm. It localises to the cytoskeleton. In terms of biological role, probable plant-specific actin binding protein that bundles and stabilizes microfilaments (MFs). This is Stomatal closure-related actin-binding protein 3 from Arabidopsis thaliana (Mouse-ear cress).